The following is a 393-amino-acid chain: NAD(P)H-quinone oxidoreductase subunit H, chloroplastic (393 aa).

This sequence belongs to the complex I 49 kDa subunit family. In terms of assembly, NDH is composed of at least 16 different subunits, 5 of which are encoded in the nucleus.

It is found in the plastid. The protein localises to the chloroplast thylakoid membrane. The catalysed reaction is a plastoquinone + NADH + (n+1) H(+)(in) = a plastoquinol + NAD(+) + n H(+)(out). It catalyses the reaction a plastoquinone + NADPH + (n+1) H(+)(in) = a plastoquinol + NADP(+) + n H(+)(out). In terms of biological role, NDH shuttles electrons from NAD(P)H:plastoquinone, via FMN and iron-sulfur (Fe-S) centers, to quinones in the photosynthetic chain and possibly in a chloroplast respiratory chain. The immediate electron acceptor for the enzyme in this species is believed to be plastoquinone. Couples the redox reaction to proton translocation, and thus conserves the redox energy in a proton gradient. The protein is NAD(P)H-quinone oxidoreductase subunit H, chloroplastic of Nasturtium officinale (Watercress).